Here is a 104-residue protein sequence, read N- to C-terminus: Small ribosomal subunit protein uS10 (104 aa).

The protein belongs to the universal ribosomal protein uS10 family. Part of the 30S ribosomal subunit.

Involved in the binding of tRNA to the ribosomes. In Aquifex aeolicus (strain VF5), this protein is Small ribosomal subunit protein uS10.